We begin with the raw amino-acid sequence, 374 residues long: N5-carboxyaminoimidazole ribonucleotide synthase (374 aa).

Residues arginine 108, lysine 148, 153-159 (GYDGKGQ), 183-186 (EKYL), glutamate 191, histidine 214, and 266-267 (NE) contribute to the ATP site. Residues 112 to 296 (KETLKSAGTK…QFDTHILAVT (185 aa)) form the ATP-grasp domain.

Belongs to the PurK/PurT family. In terms of assembly, homodimer.

It catalyses the reaction 5-amino-1-(5-phospho-beta-D-ribosyl)imidazole + hydrogencarbonate + ATP = 5-carboxyamino-1-(5-phospho-D-ribosyl)imidazole + ADP + phosphate + 2 H(+). Its pathway is purine metabolism; IMP biosynthesis via de novo pathway; 5-amino-1-(5-phospho-D-ribosyl)imidazole-4-carboxylate from 5-amino-1-(5-phospho-D-ribosyl)imidazole (N5-CAIR route): step 1/2. Its function is as follows. Catalyzes the ATP-dependent conversion of 5-aminoimidazole ribonucleotide (AIR) and HCO(3)(-) to N5-carboxyaminoimidazole ribonucleotide (N5-CAIR). This is N5-carboxyaminoimidazole ribonucleotide synthase from Staphylococcus aureus (strain COL).